A 675-amino-acid polypeptide reads, in one-letter code: Dihydrolipoyllysine-residue acetyltransferase component of pyruvate dehydrogenase complex (675 aa).

The 76-residue stretch at 2-77 (AFSVEMPELG…DVGGVIAIIG (76 aa)) folds into the Lipoyl-binding 1 domain. At K43 the chain carries N6-lipoyllysine. Residues 77–124 (GDADETPANEAPADEAPAPAEEEEPVKEEPKKEAAPEAPAATGAATDV) form a disordered region. 2 stretches are compositionally biased toward low complexity: residues 84–95 (ANEAPADEAPAP) and 112–124 (PEAP…ATDV). In terms of domain architecture, Lipoyl-binding 2 spans 121–196 (ATDVEMPELG…DVGAVIARIG (76 aa)). Position 162 is an N6-lipoyllysine (K162). Residues 200–240 (AAAAPAEEEAAPAEEEEPVKEEPKKEAAPEAPAATGAATDV) form a disordered region. Residues 205–218 (AEEEAAPAEEEEPV) are compositionally biased toward acidic residues. Residues 237–312 (ATDVEMPELG…DVGAVIARIG (76 aa)) form the Lipoyl-binding 3 domain. The residue at position 278 (K278) is an N6-lipoyllysine. The tract at residues 316–368 (AAAAPAEEEAAPAEEEEPVKEEPKKEEPKKEEPKKEAATTPAAASATVSASGD) is disordered. Positions 321 to 334 (AEEEAAPAEEEEPV) are enriched in acidic residues. Residues 335–352 (KEEPKKEEPKKEEPKKEA) show a composition bias toward basic and acidic residues. Residues 353-366 (ATTPAAASATVSAS) show a composition bias toward low complexity. The 38-residue stretch at 372–409 (YVTPLVRKLAEKHGVDLNTVTGTGIGGRIRKQDVLAAA) folds into the Peripheral subunit-binding (PSBD) domain. Active-site residues include H645 and D649.

It belongs to the 2-oxoacid dehydrogenase family. Forms a 24-polypeptide structural core with octahedral symmetry. Part of an unusual ODH/PDH supercomplex, consisting of AceE (E1), AceF (E2), and Lpd (E3) together with OdhA (E1+E2). The cofactor is (R)-lipoate.

It carries out the reaction N(6)-[(R)-dihydrolipoyl]-L-lysyl-[protein] + acetyl-CoA = N(6)-[(R)-S(8)-acetyldihydrolipoyl]-L-lysyl-[protein] + CoA. Functionally, is essential for both 2-oxoglutarate dehydrogenase (ODH) and pyruvate dehydrogenase (PDH) activities, but AceF has exclusively transacetylase (and no transsuccinylase) activity. The lipoyl residues required for ODH activity are likely provided by AceF. This chain is Dihydrolipoyllysine-residue acetyltransferase component of pyruvate dehydrogenase complex (aceF), found in Corynebacterium glutamicum (strain ATCC 13032 / DSM 20300 / JCM 1318 / BCRC 11384 / CCUG 27702 / LMG 3730 / NBRC 12168 / NCIMB 10025 / NRRL B-2784 / 534).